A 626-amino-acid polypeptide reads, in one-letter code: MAWSVADSRSLYGIRHWGAGYFDVGDSGNIVVRPNVRQRKEIDLYRLVRDLGGKGLDLPLLVRFPDILQDRVTRLCGAFDKAIAEQGYGNRYTAIYPIKVNQQEAVVKSIIATQDVSIGLEAGSKPELMAVLALAPKGCTIVCNGYKDREFIRLALIGERLGHQVFIVIEKESEVDLVIEESRKLEVRPNIGLRVRLSSLASSKWSDTGGEKGKFGLSAGQLISATDKLIAAGLGDCVRLMHFHMGSQIANIADYRLGFREAIRYFAELRALGLPVDHVDVGGGLGVDYDGTHSRNDSSINYDMAEYAHVIVSMLSEFCAENGIPHPRILSESGRAMTAHHAVLLMNVTDVERLPDTVAPIDKAEELSLPLRKLVELANLNDEELVTEIYYRASHCVSEVSEMYAEGRLSLQEKALAEDLHATLCRRLHNQLQASQRSQRQVYDELTDRLADKYFCNFSVFQSLPDTWAIDQVLPIMPVHRLAEQPTRRAVLQDLTCDSDGKLKQYVDQQSIESSMSVHEVKQGDEYLIAVFLVGAYQEILGDMHNLFGDTDSVNVYVREGGELEISGIEEHDTIEDMLRYVHLSPEDLLNRYEAKTRECDLNPEERSLYFAEFCRGLKQSSYLAV.

The residue at position 99 (K99) is an N6-(pyridoxal phosphate)lysine. Residue 279-289 (VDVGGGLGVDY) coordinates substrate.

It belongs to the Orn/Lys/Arg decarboxylase class-II family. SpeA subfamily. Mg(2+) serves as cofactor. Requires pyridoxal 5'-phosphate as cofactor.

It catalyses the reaction L-arginine + H(+) = agmatine + CO2. It functions in the pathway amine and polyamine biosynthesis; agmatine biosynthesis; agmatine from L-arginine: step 1/1. Its function is as follows. Catalyzes the biosynthesis of agmatine from arginine. The chain is Biosynthetic arginine decarboxylase from Chromobacterium violaceum (strain ATCC 12472 / DSM 30191 / JCM 1249 / CCUG 213 / NBRC 12614 / NCIMB 9131 / NCTC 9757 / MK).